Reading from the N-terminus, the 307-residue chain is Putative F-box protein PP2-B6 (307 aa).

The F-box domain maps to 42–88 (HSPFDDLPEDCISNIISFTSPRDVCVSASVSKSFAHAVQCDSIWEKF).

The sequence is that of Putative F-box protein PP2-B6 (PP2B6) from Arabidopsis thaliana (Mouse-ear cress).